Reading from the N-terminus, the 79-residue chain is Sec-independent protein translocase protein TatA (79 aa).

The helical transmembrane segment at 1-21 threads the bilayer; the sequence is MGGLQPWHWVIVIAVFVLLFG. Over residues 43–52 the composition is skewed to basic and acidic residues; sequence IKEMQSEGKS. Positions 43–79 are disordered; it reads IKEMQSEGKSDNPPATPITSERVDTNPTAEQPDKRSA.

It belongs to the TatA/E family. The Tat system comprises two distinct complexes: a TatABC complex, containing multiple copies of TatA, TatB and TatC subunits, and a separate TatA complex, containing only TatA subunits. Substrates initially bind to the TatABC complex, which probably triggers association of the separate TatA complex to form the active translocon.

The protein localises to the cell membrane. Its function is as follows. Part of the twin-arginine translocation (Tat) system that transports large folded proteins containing a characteristic twin-arginine motif in their signal peptide across membranes. TatA could form the protein-conducting channel of the Tat system. The chain is Sec-independent protein translocase protein TatA from Mycobacterium sp. (strain JLS).